Here is a 384-residue protein sequence, read N- to C-terminus: MDVETAEEQGGPAPPSGVPCGPCSAGAPALGGRREPKKYAVTDDYQLSKQVLGLGVNGKVLECFHRRTGQKCALKLLYDSPKARQEVDHHWQASGGPHIVRILDVYENMHHSKRCLLIIMECMEGGELFSRIQERGDQAFTEREAAEIMRDIGTAIQFLHSRNIAHRDVKPENLLYTSKDKDAVLKLTDFGFAKETTQNALQTPCYTPYYVAPEVLGPEKYDKSCDMWSLGVIMYILLCGFPPFYSNTGQAISPGMKRRIRLGQYGFPSPEWSEVSEDAKQLIRLLLKTDPTERLTITQFMNHPWINQSMVVPQTPLHTARVLQEDRDHWDEVKEEMTSALATMRVDYDQVKIKDLKTSNNRLLNKRRKKQAGSSSGSQGCNNQ.

M1 bears the N-acetylmethionine mark. Residues 1-22 (MDVETAEEQGGPAPPSGVPCGP) are disordered. One can recognise a Protein kinase domain in the interval 46 to 306 (QLSKQVLGLG…ITQFMNHPWI (261 aa)). Residues 52–60 (LGLGVNGKV) and K75 contribute to the ATP site. The Proton acceptor role is filled by D168. Position 203 is a phosphothreonine; by MAPK14 (T203). A Phosphoserine; by MAPK14 modification is found at S253. S309 is modified (phosphoserine; by autocatalysis). The segment at 309–345 (SMVVPQTPLHTARVLQEDRDHWDEVKEEMTSALATMR) is autoinhibitory helix. T315 is subject to Phosphothreonine; by MAPK14. Residues 337-346 (MTSALATMRV) carry the Nuclear export signal (NES) motif. A p38 MAPK-binding site region spans residues 347–371 (DYDQVKIKDLKTSNNRLLNKRRKKQ). 2 short sequence motifs (bipartite nuclear localization signal) span residues 352 to 355 (KIKD) and 366 to 370 (KRRKK). The interval 359-384 (SNNRLLNKRRKKQAGSSSGSQGCNNQ) is disordered. The span at 373–384 (GSSSGSQGCNNQ) shows a compositional bias: low complexity.

It belongs to the protein kinase superfamily. CAMK Ser/Thr protein kinase family. As to quaternary structure, heterodimer with p38-alpha/MAPK14. The heterodimer with p38-alpha/MAPK14 forms a stable complex: molecules are positioned 'face to face' so that the ATP-binding sites of both kinases are at the heterodimer interface. Interacts with TCF3 and with polycomb proteins, such as PCH2 and BMI1/PCGF4. In terms of processing, phosphorylated and activated by MAPK1/ERK2 and MAPK3/ERK1. Phosphorylated and activated by MAP kinase p38-alpha/MAPK14 at Thr-203, Ser-253 and Thr-315.

The protein localises to the nucleus. Its subcellular location is the cytoplasm. The catalysed reaction is L-seryl-[protein] + ATP = O-phospho-L-seryl-[protein] + ADP + H(+). It carries out the reaction L-threonyl-[protein] + ATP = O-phospho-L-threonyl-[protein] + ADP + H(+). Activated following phosphorylation by p38-alpha/MAPK14 following various stresses. Inhibited by ligand 5B (2'-[2-(1,3-benzodioxol-5-yl)pyrimidin-4-yl]-5',6'-dihydrospiro[piperidine-4,7'-pyrrolo[3,2-c]pyridin]- 4'(1'h)-one) and ligand P4O (2-[2-(2-fluorophenyl)pyridin-4-yl]-1,5,6,7-tetrahydro- 4h-pyrrolo[3,2-c]pyridin-4-one), 2 ATP-competitive inhibitors. In terms of biological role, stress-activated serine/threonine-protein kinase involved in cytokines production, endocytosis, cell migration, chromatin remodeling and transcriptional regulation. Following stress, it is phosphorylated and activated by MAP kinase p38-alpha/MAPK14, leading to phosphorylation of substrates. Phosphorylates serine in the peptide sequence, Hyd-X-R-X(2)-S, where Hyd is a large hydrophobic residue. MAPKAPK2 and MAPKAPK3, share the same function and substrate specificity, but MAPKAPK3 kinase activity and level in protein expression are lower compared to MAPKAPK2. Phosphorylates HSP27/HSPB1, KRT18, KRT20, RCSD1, RPS6KA3, TAB3 and TTP/ZFP36. Mediates phosphorylation of HSP27/HSPB1 in response to stress, leading to dissociate HSP27/HSPB1 from large small heat-shock protein (sHsps) oligomers and impair their chaperone activities and ability to protect against oxidative stress effectively. Involved in inflammatory response by regulating tumor necrosis factor (TNF) and IL6 production post-transcriptionally: acts by phosphorylating AU-rich elements (AREs)-binding proteins, such as TTP/ZFP36, leading to regulate the stability and translation of TNF and IL6 mRNAs. Phosphorylation of TTP/ZFP36, a major post-transcriptional regulator of TNF, promotes its binding to 14-3-3 proteins and reduces its ARE mRNA affinity leading to inhibition of dependent degradation of ARE-containing transcript. Involved in toll-like receptor signaling pathway (TLR) in dendritic cells: required for acute TLR-induced macropinocytosis by phosphorylating and activating RPS6KA3. Also acts as a modulator of Polycomb-mediated repression. The polypeptide is MAP kinase-activated protein kinase 3 (MAPKAPK3) (Bos taurus (Bovine)).